Here is a 133-residue protein sequence, read N- to C-terminus: Large-conductance mechanosensitive channel (133 aa).

The next 2 helical transmembrane spans lie at 14–34 and 67–87; these read VIDL…VSSL and GNFI…FMFV.

The protein belongs to the MscL family. As to quaternary structure, homopentamer.

The protein resides in the cell membrane. Functionally, channel that opens in response to stretch forces in the membrane lipid bilayer. May participate in the regulation of osmotic pressure changes within the cell. The protein is Large-conductance mechanosensitive channel of Bacillus mycoides (strain KBAB4) (Bacillus weihenstephanensis).